The primary structure comprises 348 residues: MDPWISTQPSLSLDLRVGLPATAAVAMVKPKVLVEEDFFHQQPLKKDPEVAALEAELKRMGAENRQLSEMLAAVAAKYEALQSQFSDMVTASANNGGGGGNNQSSTSEGGSVSPSRKRKSESLDDSPPPPPPPHPHAAPHHMHVMPGAAAAGYADQTECTSGEPCKRIREECKPKISKLYVHADPSDLSLVVKDGYQWRKYGQKVTKDNPCPRAYFRCSFAPACPVKKKVQRSAEDNTILVATYEGEHNHGQPPPPLQSAAQNSDGSGKSAGKPPHAPAAAPPAPVVPHRQHEPVVVNGEQQAAAASEMIRRNLAEQMAMTLTRDPSFKAALVTALSGRILELSPTKD.

Residues 50–84 (VAALEAELKRMGAENRQLSEMLAAVAAKYEALQSQ) adopt a coiled-coil conformation. Disordered stretches follow at residues 91–141 (ASAN…APHH) and 246–287 (GEHN…APVV). A compositionally biased stretch (low complexity) spans 102-114 (NQSSTSEGGSVSP). Residues 116–122 (RKRKSES) carry the Nuclear localization signal motif. Residues 126-136 (SPPPPPPPHPH) are compositionally biased toward pro residues. The segment at residues 187-253 (DLSLVVKDGY…YEGEHNHGQP (67 aa)) is a DNA-binding region (WRKY). The interval 267–348 (SGKSAGKPPH…RILELSPTKD (82 aa)) is transcription repression of gibberellic acid (GA)-induced promoters. Residues 275–286 (PHAPAAAPPAPV) are compositionally biased toward pro residues.

Belongs to the WRKY group II-a family. As to quaternary structure, interacts with WRKY51; this interaction promotes W box binding of the complex WRKY51/WRKY71 in a zinc ion-dependent manner. In terms of tissue distribution, highly expressed in aleurone cells. In seeds, predominantly present in the plumule, radicle and scutellum of the embryo. Expressed in roots, stems, young leaves and spikelets.

The protein resides in the nucleus. Transcription repressor. Interacts specifically with the W box (5'-(T)TGAC[CT]-3'), a frequently occurring elicitor-responsive cis-acting element. Represses specifically gibberellic acid (GA)-induced promoters in aleurone cells, probably by interfering with GAM1. Regulates, probably indirectly, the activation of defense-related genes such as GF14E during defense response. Modulates plant innate immunity against X.oryzae pv. oryzae (Xoo). Confers resistance to the virulent bacterial pathogen X.oryzae pv. oryzae (Xoo) 13751, probably via the regulation of NPR1 and PR1b defense signaling pathways. In Oryza sativa subsp. indica (Rice), this protein is WRKY transcription factor WRKY71.